The following is a 239-amino-acid chain: MQTRITWHGHSNFQVASGGTNVLIDPFFDGNPVAATRWDAIDRPDLVLVTHDHGDHVGQAIDICKATGAKLGCVVGTDARLVEAGLPRELVLNGIGFNIGGTVECAGVRITMTQAYHSSESGVPVGYIVTMPDGFTFYHAGDTGIFSEMELWGRLYAIDLALLPIGGVFTMDPRQAALACSLLRARSVIPMHWGTFPVLEQNTTRFREQLANHAPDCRLFNMTPGESLTLDRSQEGCAC.

Belongs to the UPF0173 family.

The polypeptide is UPF0173 metal-dependent hydrolase Dvul_0081 (Nitratidesulfovibrio vulgaris (strain DP4) (Desulfovibrio vulgaris)).